The following is a 469-amino-acid chain: Soluble pyridine nucleotide transhydrogenase (469 aa).

Residue 39–48 participates in FAD binding; the sequence is ERENSVGGGC.

Belongs to the class-I pyridine nucleotide-disulfide oxidoreductase family. The cofactor is FAD.

The protein resides in the cytoplasm. It carries out the reaction NAD(+) + NADPH = NADH + NADP(+). Conversion of NADPH, generated by peripheral catabolic pathways, to NADH, which can enter the respiratory chain for energy generation. This chain is Soluble pyridine nucleotide transhydrogenase, found in Photobacterium profundum (strain SS9).